A 293-amino-acid chain; its full sequence is Germ cell-specific gene 1-like protein 2 (293 aa).

The Cytoplasmic portion of the chain corresponds to methionine 1–glutamine 8. Residues alanine 9–serine 29 traverse the membrane as a helical segment. Residues histidine 30–glycine 120 are Extracellular-facing. Asparagine 59 and asparagine 67 each carry an N-linked (GlcNAc...) asparagine glycan. Residues valine 121–isoleucine 141 form a helical membrane-spanning segment. The Cytoplasmic portion of the chain corresponds to leucine 142 to aspartate 160. A helical membrane pass occupies residues alanine 161–tyrosine 181. The Extracellular segment spans residues threonine 182 to glycine 204. The chain crosses the membrane as a helical span at residues tryptophan 205–methionine 225. The Cytoplasmic portion of the chain corresponds to serine 226–cysteine 293.

It belongs to the GSG1 family.

The protein localises to the membrane. This chain is Germ cell-specific gene 1-like protein 2, found in Homo sapiens (Human).